The sequence spans 746 residues: UvrABC system protein C (746 aa).

One can recognise a GIY-YIG domain in the interval 18 to 97; that stretch reads AKPGVYKWRD…IKEFDPRFNV (80 aa). The region spanning 211–246 is the UVR domain; sequence RPYIAQLTRDMKEASAELEFEKAARLRDQIQMLETV. Residues 557 to 577 are disordered; it reads ANGNDNGEGGSDISGKGHAVP.

Belongs to the UvrC family. Interacts with UvrB in an incision complex.

Its subcellular location is the cytoplasm. The UvrABC repair system catalyzes the recognition and processing of DNA lesions. UvrC both incises the 5' and 3' sides of the lesion. The N-terminal half is responsible for the 3' incision and the C-terminal half is responsible for the 5' incision. The chain is UvrABC system protein C from Bifidobacterium longum (strain DJO10A).